We begin with the raw amino-acid sequence, 69 residues long: Cytoinsectotoxin-2a (69 aa).

This sequence belongs to the cationic peptide 06 (cytoinsectotoxin) family. In terms of tissue distribution, expressed by the venom gland.

The protein localises to the secreted. In terms of biological role, insecticidal and antimicrobial peptide. Has insecticidal activity against larvae of flesh fly S.carnaria. Has antibacterial activity against Gram-positive bacterium B.subtilis B-501 (MIC=1.25 uM) and Gram-negative bacterium E.coli DH5alpha (MIC=2.5 uM). The protein is Cytoinsectotoxin-2a of Lachesana tarabaevi (Spider).